The chain runs to 586 residues: CTP synthase 2 (586 aa).

In terms of domain architecture, Glutamine amidotransferase type-1 spans 300 to 554 (SIALVGKYTK…LAATGNLNAY (255 aa)). Active-site for GATase activity residues include Cys-399, His-526, and Glu-528. The disordered stretch occupies residues 564–586 (SDRYSDASDDSFSEPRLAELEIS). Ser-568, Ser-571, and Ser-574 each carry phosphoserine.

It belongs to the CTP synthase family.

It catalyses the reaction UTP + L-glutamine + ATP + H2O = CTP + L-glutamate + ADP + phosphate + 2 H(+). The protein operates within pyrimidine metabolism; CTP biosynthesis via de novo pathway; CTP from UDP: step 2/2. Catalyzes the ATP-dependent amination of UTP to CTP with either L-glutamine or ammonia as the source of nitrogen. Constitutes the rate-limiting enzyme in the synthesis of cytosine nucleotides. This Bos taurus (Bovine) protein is CTP synthase 2 (CTPS2).